Here is a 1075-residue protein sequence, read N- to C-terminus: Disheveled-associated activator of morphogenesis 2 (1075 aa).

The GBD/FH3 domain maps to 40 to 416 (VPIPPTEELN…QIVLQDERGD (377 aa)). A coiled-coil region spans residues 437-517 (NENEVKQWRD…VAQLNEYSQG (81 aa)). 3 disordered regions span residues 517–611 (GGSI…IPQP), 1006–1025 (KEQREKERRQKKAKAGSISE), and 1048–1075 (SKLKRNRKRSGNQGLETSRERVVTKLNY). Positions 523-532 (PAPPPPPPGG) are enriched in pro residues. The span at 533-544 (PLALSSALSSAL) shows a compositional bias: low complexity. A compositionally biased stretch (pro residues) spans 550–581 (PPLPPPLPFSSCPPPPAPPPPPGGPPPPPGAP). In terms of domain architecture, FH2 spans 605 to 1075 (KKSIPQPSHP…RERVVTKLNY (471 aa)). The DAD domain maps to 1025–1075 (EETGEFDDLVSALRSGEVFDKDLSKLKRNRKRSGNQGLETSRERVVTKLNY). Basic and acidic residues predominate over residues 1064–1075 (TSRERVVTKLNY).

Belongs to the formin homology family. In terms of tissue distribution, expressed in progenitor populations of the embryonic spinal cord (at protein level).

In terms of biological role, key regulator of the Wnt signaling pathway, which is required for various processes during development, such as dorsal patterning, determination of left/right symmetry or myelination in the central nervous system. Acts downstream of Wnt ligands and upstream of beta-catenin (CTNNB1). Required for canonical Wnt signaling pathway during patterning in the dorsal spinal cord by promoting the aggregation of Disheveled (Dvl) complexes, thereby clustering and formation of Wnt receptor signalosomes and potentiating Wnt activity. During dorsal patterning of the spinal cord, inhibits oligodendrocytes differentiation via interaction with PIP5K1A. Also regulates non-canonical Wnt signaling pathway. Acts downstream of PITX2 in the developing gut and is required for left/right asymmetry within dorsal mesentery: affects mesenchymal condensation by lengthening cadherin-based junctions through WNT5A and non-canonical Wnt signaling, inducing polarized condensation in the left dorsal mesentery necessary to initiate gut rotation. Together with DAAM1, required for myocardial maturation and sarcomere assembly. The chain is Disheveled-associated activator of morphogenesis 2 from Gallus gallus (Chicken).